The sequence spans 444 residues: 23S rRNA (uracil(1939)-C(5))-methyltransferase RlmD (444 aa).

Residues 5–67 enclose the TRAM domain; sequence RSRIDRTPFQ…RHFDEARTVE (63 aa). Cysteine 80, cysteine 86, cysteine 89, and cysteine 168 together coordinate [4Fe-4S] cluster. S-adenosyl-L-methionine contacts are provided by glutamine 276, phenylalanine 305, asparagine 310, glutamate 326, aspartate 353, and aspartate 374. The Nucleophile role is filled by cysteine 400.

The protein belongs to the class I-like SAM-binding methyltransferase superfamily. RNA M5U methyltransferase family. RlmD subfamily.

It catalyses the reaction uridine(1939) in 23S rRNA + S-adenosyl-L-methionine = 5-methyluridine(1939) in 23S rRNA + S-adenosyl-L-homocysteine + H(+). In terms of biological role, catalyzes the formation of 5-methyl-uridine at position 1939 (m5U1939) in 23S rRNA. This Stenotrophomonas maltophilia (strain R551-3) protein is 23S rRNA (uracil(1939)-C(5))-methyltransferase RlmD.